Here is a 408-residue protein sequence, read N- to C-terminus: UDP-N-acetylglucosamine--dolichyl-phosphate N-acetylglucosaminephosphotransferase (408 aa).

At 1–10 (MWAFSELPMP) the chain is on the lumenal side. The chain crosses the membrane as a helical span at residues 11 to 38 (LLINLIVSLLGFVATVTLIPAFRGHFIA). Residues 39–58 (ARLCGQDLNKTSRQQIPESQ) are Cytoplasmic-facing. UDP-N-acetyl-alpha-D-glucosamine is bound by residues 44-46 (QDL) and glutamate 56. Leucine 46 contacts tunicamycin A1. A helical membrane pass occupies residues 59–78 (GVISGAVFLIILFCFIPFPF). The Lumenal segment spans residues 79 to 91 (LNCFVKEQCKAFP). The chain crosses the membrane as a helical span at residues 92–118 (HHEFVALIGALLAICCMIFLGFADDVL). A tunicamycin A1-binding site is contributed by asparagine 119. At 119–121 (NLR) the chain is on the cytoplasmic side. The chain crosses the membrane as a helical span at residues 122 to 143 (WRHKLLLPTAASLPLLMVYFTN). Lysine 125 is a dolichyl phosphate binding site. At 144 to 166 (FGNTTIVVPKPFRPILGLHLDLG) the chain is on the lumenal side. N-linked (GlcNAc...) asparagine glycosylation occurs at asparagine 146. Residues 167-186 (ILYYVYMGLLAVFCTNAINI) traverse the membrane as a helical segment. 178-186 (VFCTNAINI) contributes to the dolichyl phosphate binding site. Asparagine 185 lines the tunicamycin A1 pocket. Asparagine 185 contributes to the Mg(2+) binding site. The Cytoplasmic segment spans residues 187-192 (LAGING). Asparagine 191 is a UDP-N-acetyl-alpha-D-glucosamine binding site. Residues 193–213 (LEAGQSLVISASIIVFNLVEL) form a helical membrane-spanning segment. Over 214–218 (EGDCR) the chain is Lumenal. The helical transmembrane segment at 219–242 (DDHVFSLYFMIPFFFTTLGLLYHN) threads the bilayer. Topologically, residues 243-250 (WYPSRVFV) are cytoplasmic. The helical transmembrane segment at 251–269 (GDTFCYFAGMTFAVVGILG) threads the bilayer. Aspartate 252 serves as a coordination point for tunicamycin A1. Residue aspartate 252 participates in Mg(2+) binding. The Lumenal portion of the chain corresponds to 270–271 (HF). Residues 272 to 293 (SKTMLLFFMPQVFNFLYSLPQL) traverse the membrane as a helical segment. Topologically, residues 294-375 (LHIIPCPRHR…LLLKVLGPIH (82 aa)) are cytoplasmic. 301-303 (RHR) contacts UDP-N-acetyl-alpha-D-glucosamine. Arginine 303 contacts tunicamycin A1. A helical transmembrane segment spans residues 376–400 (ERNLTLLLLLLQILGSAITFSIRYQ). The Lumenal segment spans residues 401–408 (LVRLFYDV).

Belongs to the glycosyltransferase 4 family. As to quaternary structure, homodimer. It depends on Mg(2+) as a cofactor.

It localises to the endoplasmic reticulum membrane. The enzyme catalyses a di-trans,poly-cis-dolichyl phosphate + UDP-N-acetyl-alpha-D-glucosamine = an N-acetyl-alpha-D-glucosaminyl-diphospho-di-trans,poly-cis-dolichol + UMP. It functions in the pathway protein modification; protein glycosylation. Inhibited by natural nucleoside antibiotic tunicamycin, which acts as a structural analog and competitor of UDP-GlcNAc. Activated by mannosylphosphoryldolichol and phospholipids such as phosphatidylglycerol and phosphatidylcholine. Its function is as follows. UDP-N-acetylglucosamine--dolichyl-phosphate N-acetylglucosaminephosphotransferase that operates in the biosynthetic pathway of dolichol-linked oligosaccharides, the glycan precursors employed in protein asparagine (N)-glycosylation. The assembly of dolichol-linked oligosaccharides begins on the cytosolic side of the endoplasmic reticulum membrane and finishes in its lumen. The sequential addition of sugars to dolichol pyrophosphate produces dolichol-linked oligosaccharides containing fourteen sugars, including two GlcNAcs, nine mannoses and three glucoses. Once assembled, the oligosaccharide is transferred from the lipid to nascent proteins by oligosaccharyltransferases. Catalyzes the initial step of dolichol-linked oligosaccharide biosynthesis, transfering GlcNAc-1-P from cytosolic UDP-GlcNAc onto the carrier lipid dolichyl phosphate (P-dolichol), yielding GlcNAc-P-P-dolichol embedded in the cytoplasmic leaflet of the endoplasmic reticulum membrane. This is UDP-N-acetylglucosamine--dolichyl-phosphate N-acetylglucosaminephosphotransferase from Homo sapiens (Human).